Consider the following 229-residue polypeptide: Orotidine 5'-phosphate decarboxylase (229 aa).

Residues D10, K32, 59 to 68 (DLKFHDIPNT), T119, R180, Q189, G209, and R210 each bind substrate. The active-site Proton donor is the K61.

It belongs to the OMP decarboxylase family. Type 1 subfamily. As to quaternary structure, homodimer.

It carries out the reaction orotidine 5'-phosphate + H(+) = UMP + CO2. It participates in pyrimidine metabolism; UMP biosynthesis via de novo pathway; UMP from orotate: step 2/2. In terms of biological role, catalyzes the decarboxylation of orotidine 5'-monophosphate (OMP) to uridine 5'-monophosphate (UMP). The sequence is that of Orotidine 5'-phosphate decarboxylase from Legionella pneumophila (strain Paris).